The primary structure comprises 46 residues: Esculentin-1SEb (46 aa).

The cysteines at positions 40 and 46 are disulfide-linked.

As to expression, expressed by the skin glands.

It localises to the secreted. In terms of biological role, mast cell degranulating peptide. Causes histamine release from rat peritoneal mast cells in vitro. Has antibacterial activity against the Gram-negative bacterium E.coli K12 and Gram-positive bacterium M.luteus NCT C2665. This chain is Esculentin-1SEb, found in Lithobates sevosus (Dusky gopher frog).